Here is a 592-residue protein sequence, read N- to C-terminus: MASQLSYLQQELLRALLESGVTKEALKKALADGDNYAYPNVPLDDIRNLDEGDNCVQLPNGLGEPQMSEDESSDDGGDFTPPIMKELERLSPEEAAHQKAVVERLLQEDPWHVAKLVKSYLQQHNIPQREVVDTTGLNQSHLSQHLNKGTPMKTQKRAALYAWYVGKQREIARQFTHAGHSMITDDMSCDDVPNKKMRRNRFKWGPASQQILFQAYERQKNPSKEEREALVEECNRAECLQRGVSPSQAQGLGSNLVTEVRVYNWFANSGKEEAFRHKLAMDTYNGQQSSAQPLSTHDLPHGKTPRYTQDSSTDRSAAMANSQSTLSPSALEPSHILMNSDSKMVPVSGGSLPPVSTLTALHSLDHSQHTLGQTQNLIMASLPSVMTIGTDSALGPAFSNPGSSTLVIGLASQTQSVPVINSVGSSLTTLQSVQFSQQLHPSHQQPIVQQVQSHMAQSPFMATMAQLQSPHALYSHKPEVAQYTSAGFFPQTMVITDTSNLGTLTSLTPSKQVVSHHPTAHGDSPGSQLHNQDSSILHLHPSHRLSPIPTVSSASLIHYHNSSSPENHSHLLSPSHNTIDSFISTQMASSSQ.

The interval 1 to 31 (MASQLSYLQQELLRALLESGVTKEALKKALA) is dimerization. An HNF-p1 domain is found at 1-32 (MASQLSYLQQELLRALLESGVTKEALKKALAD). A disordered region spans residues 54–78 (NCVQLPNGLGEPQMSEDESSDDGGD). Residues 67–77 (MSEDESSDDGG) show a composition bias toward acidic residues. The POU-specific atypical domain maps to 85 to 180 (KELERLSPEE…IARQFTHAGH (96 aa)). Interaction with DNA regions lie at residues 128 to 130 (QRE), 141 to 147 (HLSQHLN), 153 to 156 (KTQK), 201 to 204 (RFKW), 261 to 263 (RVY), and 268 to 271 (NSGK). A Nuclear localization signal motif is present at residues 195 to 203 (KKMRRNRFK). Residues 197–277 (MRRNRFKWGP…NSGKEEAFRH (81 aa)) constitute a DNA-binding region (homeobox; HNF1-type). 2 stretches are compositionally biased toward polar residues: residues 284–295 (YNGQQSSAQPLS) and 306–328 (RYTQ…TLSP). 2 disordered regions span residues 284-329 (YNGQ…LSPS) and 511-533 (KQVV…HNQD).

This sequence belongs to the HNF1 homeobox family. In terms of assembly, binds DNA as dimer. Forms a homodimer or heterodimer with HNF1-alpha-A. Potentially also form a heterodimer with HNF1-beta. Liver.

Its subcellular location is the nucleus. In terms of biological role, transcriptional activator that regulates the tissue specific expression of multiple genes, especially in pancreas and liver. Binds to the hepatocyte specific promoter element HP1. Binds to the inverted palindrome 5'-GTTAATNATTAAC-3'. This is Hepatocyte nuclear factor 1-alpha-B (hnf1a-b) from Xenopus laevis (African clawed frog).